The primary structure comprises 427 residues: 3-phosphoshikimate 1-carboxyvinyltransferase (427 aa).

Positions 22, 23, and 27 each coordinate 3-phosphoshikimate. Phosphoenolpyruvate is bound at residue lysine 22. Residues glycine 96 and arginine 124 each contribute to the phosphoenolpyruvate site. The 3-phosphoshikimate site is built by serine 169, serine 170, glutamine 171, serine 197, aspartate 313, asparagine 336, and lysine 340. Glutamine 171 is a phosphoenolpyruvate binding site. The active-site Proton acceptor is aspartate 313. Residues arginine 344, arginine 386, and lysine 411 each contribute to the phosphoenolpyruvate site.

Belongs to the EPSP synthase family. As to quaternary structure, monomer.

Its subcellular location is the cytoplasm. It carries out the reaction 3-phosphoshikimate + phosphoenolpyruvate = 5-O-(1-carboxyvinyl)-3-phosphoshikimate + phosphate. It participates in metabolic intermediate biosynthesis; chorismate biosynthesis; chorismate from D-erythrose 4-phosphate and phosphoenolpyruvate: step 6/7. Catalyzes the transfer of the enolpyruvyl moiety of phosphoenolpyruvate (PEP) to the 5-hydroxyl of shikimate-3-phosphate (S3P) to produce enolpyruvyl shikimate-3-phosphate and inorganic phosphate. The chain is 3-phosphoshikimate 1-carboxyvinyltransferase from Escherichia coli O6:H1 (strain CFT073 / ATCC 700928 / UPEC).